A 222-amino-acid chain; its full sequence is Flagellar L-ring protein (222 aa).

The N-terminal stretch at 1–21 is a signal peptide; sequence MQTFLYPRTWLILGLLLLGSG. The N-palmitoyl cysteine moiety is linked to residue C22. C22 is lipidated: S-diacylglycerol cysteine.

Belongs to the FlgH family. The basal body constitutes a major portion of the flagellar organelle and consists of four rings (L,P,S, and M) mounted on a central rod.

The protein localises to the cell outer membrane. The protein resides in the bacterial flagellum basal body. In terms of biological role, assembles around the rod to form the L-ring and probably protects the motor/basal body from shearing forces during rotation. This Methylobacillus flagellatus (strain ATCC 51484 / DSM 6875 / VKM B-1610 / KT) protein is Flagellar L-ring protein.